Reading from the N-terminus, the 81-residue chain is Large ribosomal subunit protein bL31B (81 aa).

This sequence belongs to the bacterial ribosomal protein bL31 family. Type B subfamily. Part of the 50S ribosomal subunit.

This chain is Large ribosomal subunit protein bL31B, found in Bacillus licheniformis (strain ATCC 14580 / DSM 13 / JCM 2505 / CCUG 7422 / NBRC 12200 / NCIMB 9375 / NCTC 10341 / NRRL NRS-1264 / Gibson 46).